Reading from the N-terminus, the 602-residue chain is Putative pentatricopeptide repeat-containing protein At1g12700, mitochondrial (602 aa).

Residues 1–95 constitute a mitochondrion transit peptide; sequence MMIKRSITTN…PSLVDFSRFF (95 aa). 14 PPR repeats span residues 87 to 121, 122 to 156, 157 to 191, 192 to 226, 227 to 261, 262 to 296, 297 to 331, 332 to 366, 367 to 401, 402 to 436, 437 to 471, 472 to 506, 507 to 541, and 542 to 576; these read SLVD…GIAH, NIYT…GYEP, DTTT…GCQP, DVVT…NVKA, DVFT…GIKS, SVVT…EIVP, NVIT…GISP, NIIT…KCSP, DIVT…GLVA, NAVT…GVLP, DVMT…KMDL, GIVM…GVKP, NVMT…GNAP, and NDCT…GFSA.

This sequence belongs to the PPR family. P subfamily.

It is found in the mitochondrion. The sequence is that of Putative pentatricopeptide repeat-containing protein At1g12700, mitochondrial from Arabidopsis thaliana (Mouse-ear cress).